Reading from the N-terminus, the 201-residue chain is Ribonuclease MRP protein subunit RMP1 (201 aa).

Residues 86–108 (YWQFNGVIALGQFVTLGCTLVTL) form a helical membrane-spanning segment.

In terms of assembly, component of RNase MRP complex which consists of an RNA moiety and at least 10 protein subunits including POP1, POP3, POP4, POP5, POP6, POP7, POP8, RMP1, RPP1 and SNM1, many of which are shared with the RNase P complex.

It is found in the membrane. The protein resides in the cytoplasm. Its subcellular location is the nucleus. Functionally, functions as part of ribonuclease MRP (RNase MRP), which is involved in rRNA processing in mitochondria. In Saccharomyces cerevisiae (strain ATCC 204508 / S288c) (Baker's yeast), this protein is Ribonuclease MRP protein subunit RMP1.